Reading from the N-terminus, the 1550-residue chain is DNA excision repair protein ERCC-6-like 2 (1550 aa).

The segment at 1–23 is disordered; the sequence is MDPSAPQPRAETSGKDIWHPGER. Basic and acidic residues predominate over residues 12–22; the sequence is TSGKDIWHPGE. The region spanning 135–321 is the Helicase ATP-binding domain; the sequence is YGHYIHGGGC…WCVMDWAVPG (187 aa). 148–155 is an ATP binding site; it reads DDMGLGKT. Positions 272-275 match the DEAH box motif; sequence DEAH. Residues 512–662 enclose the Helicase C-terminal domain; that stretch reads VLQQLLNHCR…CVVVGSENAK (151 aa). Residues 785 to 796 carry the Atypical PIP-box motif; sequence PGQLTLLQCGFS. 3 disordered regions span residues 808–848, 914–1002, and 1354–1410; these read DSDG…TSKH, FPDN…SSLR, and AETK…TRTG. Composition is skewed to basic and acidic residues over residues 830 to 840 and 933 to 953; these read EAKDAGCEKNQ and TEHT…DKRN. 2 positions are modified to phosphoserine: S980 and S983. Positions 992-1002 are enriched in basic residues; it reads SRVRKRASSLR. Polar residues predominate over residues 1359-1388; it reads SPVSSTQEIDSGKNSQASEDTVTSRSLNSE. A phosphoserine mark is found at S1373 and S1376. The span at 1389-1405 shows a compositional bias: basic and acidic residues; that stretch reads SETRERRLENTMKDQQD.

The protein belongs to the SNF2/RAD54 helicase family. Interacts with NEK6. Interacts (via an atypical PIP-box) with PCNA; this interaction facilitates cenrtomeric localization of ERCC6L2. Interacts with CYREN; this interaction is DNA independent. Interacts with XRCC6 and XRCC5. In terms of processing, phosphorylated by NEK6. As to expression, expressed in bone marrow (at protein level).

The protein localises to the nucleus. The protein resides in the cytoplasm. It is found in the cytoskeleton. Its subcellular location is the microtubule organizing center. It localises to the centrosome. The protein localises to the mitochondrion. The protein resides in the chromosome. It is found in the centromere. Its function is as follows. Promotes double-strand break (DSB) end-joining and facilitates programmed recombination by controlling how DNA ends are joined in a spatially oriented manner during repair. Also plays a role in DNA repair by restricting DNA end resection in double strand break (DSB) repair. Facilitates replication of complex DNA regions and regulates the maintenance of chromatin structure. The protein is DNA excision repair protein ERCC-6-like 2 of Homo sapiens (Human).